The chain runs to 96 residues: SAGA-associated factor 11 (96 aa).

The SGF11-type zinc finger occupies 68–89 (FHCKNCGRDVSANRFAAHLQRC).

The protein belongs to the SGF11 family. Component of the 1.8 MDa SAGA transcription coactivator-HAT complex. SAGA is built of 5 distinct domains with specialized functions. Within the SAGA complex, SUS1, SGF11, SGF73 and UBP8 form an additional subcomplex of SAGA called the DUB module (deubiquitination module). Interacts directly with SGF73, SUS1 and UBP8.

Its subcellular location is the nucleus. Functions as a component of the transcription regulatory histone acetylation (HAT) complex SAGA. At the promoters, SAGA is required for recruitment of the basal transcription machinery. It influences RNA polymerase II transcriptional activity through different activities such as TBP interaction and promoter selectivity, interaction with transcription activators, and chromatin modification through histone acetylation and deubiquitination. SAGA acetylates nucleosomal histone H3 to some extent (to form H3K9ac, H3K14ac, H3K18ac and H3K23ac). SAGA interacts with DNA via upstream activating sequences (UASs). Involved in transcriptional regulation of a subset of SAGA-regulated genes. Within the SAGA complex, participates in a subcomplex, that specifically deubiquitinates histones H2B. The protein is SAGA-associated factor 11 of Vanderwaltozyma polyspora (strain ATCC 22028 / DSM 70294 / BCRC 21397 / CBS 2163 / NBRC 10782 / NRRL Y-8283 / UCD 57-17) (Kluyveromyces polysporus).